We begin with the raw amino-acid sequence, 118 residues long: MISKPDKNKIRQRRHLRVRGKISGTAERPRLSVYRSNKNIYAQLIDDVKGVTLASASTNDSEVSGKTKTEQASGVGALIAKRANEKNITEVVFDRGGYLYHGRVQALAEAARENGLKF.

This sequence belongs to the universal ribosomal protein uL18 family. In terms of assembly, part of the 50S ribosomal subunit; part of the 5S rRNA/L5/L18/L25 subcomplex. Contacts the 5S and 23S rRNAs.

In terms of biological role, this is one of the proteins that bind and probably mediate the attachment of the 5S RNA into the large ribosomal subunit, where it forms part of the central protuberance. This chain is Large ribosomal subunit protein uL18, found in Limosilactobacillus reuteri (strain DSM 20016) (Lactobacillus reuteri).